The sequence spans 106 residues: Pyrimidine/purine nucleoside phosphorylase (106 aa).

The protein belongs to the nucleoside phosphorylase PpnP family.

It catalyses the reaction a purine D-ribonucleoside + phosphate = a purine nucleobase + alpha-D-ribose 1-phosphate. The enzyme catalyses adenosine + phosphate = alpha-D-ribose 1-phosphate + adenine. It carries out the reaction cytidine + phosphate = cytosine + alpha-D-ribose 1-phosphate. The catalysed reaction is guanosine + phosphate = alpha-D-ribose 1-phosphate + guanine. It catalyses the reaction inosine + phosphate = alpha-D-ribose 1-phosphate + hypoxanthine. The enzyme catalyses thymidine + phosphate = 2-deoxy-alpha-D-ribose 1-phosphate + thymine. It carries out the reaction uridine + phosphate = alpha-D-ribose 1-phosphate + uracil. The catalysed reaction is xanthosine + phosphate = alpha-D-ribose 1-phosphate + xanthine. Catalyzes the phosphorolysis of diverse nucleosides, yielding D-ribose 1-phosphate and the respective free bases. Can use uridine, adenosine, guanosine, cytidine, thymidine, inosine and xanthosine as substrates. Also catalyzes the reverse reactions. This Burkholderia vietnamiensis (strain G4 / LMG 22486) (Burkholderia cepacia (strain R1808)) protein is Pyrimidine/purine nucleoside phosphorylase.